The sequence spans 293 residues: MAAITASMVAELRAKTDAPMMECKKALTEADGDMARAEELLRVKLGNKASKAASRVTAEGVVASFIGGNAGSLVELNCETDFVSKNDDFLAFSKKVAELVATQNPADVAALSALPLDGSTVDAVRLALVGKIGENLSIRRFVRFDTANKLAAYLHGTRIGVLVEYTGADEQVGKDVAMHIAAMKPVSLSSEDVPAELIAKERSIAEQKAAESGKPAEIVAKMVDGSVQKYLKEVSLLNQTFVKNDKQTIEQMLKAGNASVQKFALFVVGEGIEKKQDDFAAEVAAQVAAAKQQ.

The segment at 80-83 (TDFV) is involved in Mg(2+) ion dislocation from EF-Tu.

Belongs to the EF-Ts family.

The protein resides in the cytoplasm. In terms of biological role, associates with the EF-Tu.GDP complex and induces the exchange of GDP to GTP. It remains bound to the aminoacyl-tRNA.EF-Tu.GTP complex up to the GTP hydrolysis stage on the ribosome. This Paraburkholderia xenovorans (strain LB400) protein is Elongation factor Ts.